A 269-amino-acid chain; its full sequence is Cell wall protein TIR3 (269 aa).

An N-terminal signal peptide occupies residues 1–22 (MSFTKIAALLAVAAASTQLVSA). The segment at 128 to 242 (SGSESATASS…TNSSSSATSK (115 aa)) is disordered. N-linked (GlcNAc...) asparagine glycosylation is present at asparagine 234. Glycine 245 carries the GPI-anchor amidated glycine lipid modification. Residues 246–269 (AAMDMGFFSAGVGAAIAGAAAMLL) constitute a propeptide, removed in mature form.

Belongs to the SRP1/TIP1 family. Post-translationally, extensively O-glycosylated. The GPI-anchor is attached to the protein in the endoplasmic reticulum and serves to target the protein to the cell surface. There, the glucosamine-inositol phospholipid moiety is cleaved off and the GPI-modified mannoprotein is covalently attached via its lipidless GPI glycan remnant to the 1,6-beta-glucan of the outer cell wall layer.

The protein resides in the secreted. It localises to the cell wall. The protein localises to the membrane. In terms of biological role, component of the cell wall. Required for anaerobic growth. The sequence is that of Cell wall protein TIR3 (TIR3) from Saccharomyces cerevisiae (strain ATCC 204508 / S288c) (Baker's yeast).